The chain runs to 122 residues: Large ribosomal subunit protein uL18 (122 aa).

The tract at residues 1 to 26 (MSNLSRKQQTQKRHRRLRRHLKGTAQ) is disordered. Positions 9 to 22 (QTQKRHRRLRRHLK) are enriched in basic residues.

Belongs to the universal ribosomal protein uL18 family. As to quaternary structure, part of the 50S ribosomal subunit; part of the 5S rRNA/L5/L18/L25 subcomplex. Contacts the 5S and 23S rRNAs.

This is one of the proteins that bind and probably mediate the attachment of the 5S RNA into the large ribosomal subunit, where it forms part of the central protuberance. This chain is Large ribosomal subunit protein uL18, found in Prochlorococcus marinus (strain MIT 9313).